The sequence spans 505 residues: Zinc finger protein 649 (505 aa).

Residues 8-79 (LTLEDVAVDF…EDEIHSPAHP (72 aa)) enclose the KRAB domain. Residue Lys-112 forms a Glycyl lysine isopeptide (Lys-Gly) (interchain with G-Cter in SUMO2) linkage. 10 C2H2-type zinc fingers span residues 178–200 (HECT…KRIH), 206–228 (HVCS…ERAH), 234–256 (HGCS…ERAH), 262–284 (YGCS…QRIH), 290–312 (HQCS…QRTH), 318–340 (HTCS…QRTH), 346–368 (YGCI…QRYH), 374–396 (FVCP…QKIH), 402–424 (YKCS…HRTH), and 430–452 (YGCD…KRIH). The interval 455–481 (EKRGDSVKVENPSTASHSLSPSEHVQG) is disordered. Positions 465-477 (NPSTASHSLSPSE) are enriched in polar residues.

It belongs to the krueppel C2H2-type zinc-finger protein family. In terms of tissue distribution, highly expressed in heart, skeletal muscle, and brain. Lower expression in liver, lung, kidney, pancreas and placenta.

The protein localises to the nucleus. Its function is as follows. Transcriptional repressor. Regulator of transcriptional factor complexes and may suppress SRE and AP-1 transcription activities mediated by growth factor signaling pathways. This Homo sapiens (Human) protein is Zinc finger protein 649 (ZNF649).